A 230-amino-acid polypeptide reads, in one-letter code: Protein tumorous testis (230 aa).

The 92-residue stretch at glycine 37–serine 128 folds into the RRM domain.

In terms of assembly, part of a complex composed of at least tut, bam and bgcn; complex formation does not require RNA. Interacts with bam (via N-terminus); the interaction is direct. Interacts with bgcn; the interaction is indirect and is mediated by bam. As part of the bam-bgcn-tut complex associates with twin; may recruit the CCR4-NOT1 deadenylation complex to mRNA 3'UTRs to mediate post-transcriptional regulation of expression.

Its subcellular location is the cytoplasm. Functionally, RNA binding protein that forms a complex with bam and bgcn, involved in 3'UTR-dependent regulation of a subset of mRNAs. Preferentially binds a long isoform of mei-P26 transcripts. Involved in 3'UTR-dependent post-transcriptional repression of several 3'-RNA processing factors. Involved in promoting germline stem cell lineage differentiation and mitosis-to-meiosis transition. Required for proper transit amplification of spermatogonia. The polypeptide is Protein tumorous testis (Drosophila melanogaster (Fruit fly)).